Consider the following 335-residue polypeptide: Probable cytosolic iron-sulfur protein assembly protein Ciao1 (335 aa).

WD repeat units follow at residues Gly12–Lys51, Gly57–Asn96, Gly101–Cys140, Pro146–Asp185, Ser192–Gly231, Gln250–Glu289, and Ala301–Glu335.

It belongs to the WD repeat CIA1 family. Post-translationally, conjugated to URM1, a ubiquitin-like protein.

Essential component of the cytosolic iron-sulfur (Fe/S) protein assembly machinery. Required for the maturation of extramitochondrial Fe/S proteins. The sequence is that of Probable cytosolic iron-sulfur protein assembly protein Ciao1 from Drosophila melanogaster (Fruit fly).